The sequence spans 65 residues: Large ribosomal subunit protein bL31 (65 aa).

Residues Cys-16, Cys-18, Cys-36, and Cys-39 each contribute to the Zn(2+) site.

This sequence belongs to the bacterial ribosomal protein bL31 family. Type A subfamily. Part of the 50S ribosomal subunit. It depends on Zn(2+) as a cofactor.

Binds the 23S rRNA. This chain is Large ribosomal subunit protein bL31, found in Carboxydothermus hydrogenoformans (strain ATCC BAA-161 / DSM 6008 / Z-2901).